The sequence spans 176 residues: Translation initiation factor IF-3 (176 aa).

Belongs to the IF-3 family. As to quaternary structure, monomer.

It is found in the cytoplasm. Its function is as follows. IF-3 binds to the 30S ribosomal subunit and shifts the equilibrium between 70S ribosomes and their 50S and 30S subunits in favor of the free subunits, thus enhancing the availability of 30S subunits on which protein synthesis initiation begins. This is Translation initiation factor IF-3 from Microcystis aeruginosa (strain NIES-843 / IAM M-2473).